The sequence spans 565 residues: Formate--tetrahydrofolate ligase (565 aa).

ATP is bound at residue 65 to 72; it reads TPAGEGKT.

It belongs to the formate--tetrahydrofolate ligase family.

It carries out the reaction (6S)-5,6,7,8-tetrahydrofolate + formate + ATP = (6R)-10-formyltetrahydrofolate + ADP + phosphate. It functions in the pathway one-carbon metabolism; tetrahydrofolate interconversion. The sequence is that of Formate--tetrahydrofolate ligase from Syntrophus aciditrophicus (strain SB).